We begin with the raw amino-acid sequence, 432 residues long: Enolase (432 aa).

Glutamine 163 contributes to the (2R)-2-phosphoglycerate binding site. Glutamate 205 (proton donor) is an active-site residue. Mg(2+) is bound by residues aspartate 242, glutamate 285, and aspartate 312. Lysine 337, arginine 366, serine 367, and lysine 388 together coordinate (2R)-2-phosphoglycerate. The active-site Proton acceptor is lysine 337.

Belongs to the enolase family. Requires Mg(2+) as cofactor.

The protein localises to the cytoplasm. It is found in the secreted. It localises to the cell surface. The catalysed reaction is (2R)-2-phosphoglycerate = phosphoenolpyruvate + H2O. It functions in the pathway carbohydrate degradation; glycolysis; pyruvate from D-glyceraldehyde 3-phosphate: step 4/5. Its function is as follows. Catalyzes the reversible conversion of 2-phosphoglycerate (2-PG) into phosphoenolpyruvate (PEP). It is essential for the degradation of carbohydrates via glycolysis. The polypeptide is Enolase (Bifidobacterium longum (strain DJO10A)).